An 83-amino-acid chain; its full sequence is UPF0729 protein CBG02799 (83 aa).

The disordered stretch occupies residues 51–83 (QEKKEEEEEKEKSCCSTEAENTTEVTTETKKDQ). A compositionally biased stretch (low complexity) spans 67–76 (TEAENTTEVT).

This sequence belongs to the UPF0729 family.

The protein is UPF0729 protein CBG02799 of Caenorhabditis briggsae.